The chain runs to 212 residues: Probable dual specificity protein phosphatase DDB_G0269404 (212 aa).

The Tyrosine-protein phosphatase domain maps to 30 to 169; that stretch reads FDAQEVIPNL…LINYEATILK (140 aa). Catalysis depends on Cys-113, which acts as the Phosphocysteine intermediate.

The protein belongs to the protein-tyrosine phosphatase family. Non-receptor class dual specificity subfamily.

The catalysed reaction is O-phospho-L-tyrosyl-[protein] + H2O = L-tyrosyl-[protein] + phosphate. The enzyme catalyses O-phospho-L-seryl-[protein] + H2O = L-seryl-[protein] + phosphate. It carries out the reaction O-phospho-L-threonyl-[protein] + H2O = L-threonyl-[protein] + phosphate. Its function is as follows. Has a dual specificity toward Ser/Thr and Tyr-containing proteins. This is Probable dual specificity protein phosphatase DDB_G0269404 from Dictyostelium discoideum (Social amoeba).